We begin with the raw amino-acid sequence, 135 residues long: Large ribosomal subunit protein uL16c (135 aa).

Belongs to the universal ribosomal protein uL16 family. Part of the 50S ribosomal subunit.

The protein localises to the plastid. It is found in the chloroplast. The sequence is that of Large ribosomal subunit protein uL16c from Daucus carota (Wild carrot).